Here is a 347-residue protein sequence, read N- to C-terminus: MNPIIFIIILMTVMLGTTIVMISSHWLRIWIGFEMNMLAIIPIMMKKHNPRATAASSDYFLTQSTASMLLMMAIIINLMFSGQWTVTKLFHPTASMLMTMALAMKLGMAPFHFWVPEVTQGIPLSSGLILLTWQKLVPMSVLYQILPSINLDLILTLSILSIMIGGWGGLNQTQLRKIMAYSSIAHMGWMTAILPYNPTMMLLNLIIYITMTSTMFLLFMANSTTTTLSLSLTWNKMPIMTTLVLITLLSMGGLPPLSGFVPKWMIIQEMTKNNSIILPTLMAITALLNLYFYMRLTYSTTLTMFPSTNNMKMKWQFSTTKRMTLLPTLTVLSTMLLPLTPILSILE.

11 consecutive transmembrane segments (helical) span residues 3 to 23, 25 to 45, 66 to 86, 96 to 116, 122 to 142, 145 to 165, 178 to 198, 200 to 220, 237 to 257, 274 to 294, and 325 to 345; these read PIIFIIILMTVMLGTTIVMIS, HWLRIWIGFEMNMLAIIPIMM, ASMLLMMAIIINLMFSGQWTV, MLMTMALAMKLGMAPFHFWVP, IPLSSGLILLTWQKLVPMSVL, ILPSINLDLILTLSILSIMIG, IMAYSSIAHMGWMTAILPYNP, MMLLNLIIYITMTSTMFLLFM, MPIMTTLVLITLLSMGGLPPL, NSIILPTLMAITALLNLYFYM, and LLPTLTVLSTMLLPLTPILSI.

It belongs to the complex I subunit 2 family. As to quaternary structure, core subunit of respiratory chain NADH dehydrogenase (Complex I) which is composed of 45 different subunits. Interacts with TMEM242.

The protein resides in the mitochondrion inner membrane. It catalyses the reaction a ubiquinone + NADH + 5 H(+)(in) = a ubiquinol + NAD(+) + 4 H(+)(out). Functionally, core subunit of the mitochondrial membrane respiratory chain NADH dehydrogenase (Complex I) which catalyzes electron transfer from NADH through the respiratory chain, using ubiquinone as an electron acceptor. Essential for the catalytic activity and assembly of complex I. This Capra hircus (Goat) protein is NADH-ubiquinone oxidoreductase chain 2.